A 395-amino-acid polypeptide reads, in one-letter code: 1-deoxy-D-xylulose 5-phosphate reductoisomerase (395 aa).

NADPH-binding residues include threonine 10, glycine 11, serine 12, isoleucine 13, alanine 36, and asparagine 123. Residue lysine 124 coordinates 1-deoxy-D-xylulose 5-phosphate. Glutamate 125 contributes to the NADPH binding site. Aspartate 149 contributes to the Mn(2+) binding site. Residues serine 150, glutamate 151, serine 185, and histidine 208 each coordinate 1-deoxy-D-xylulose 5-phosphate. Glutamate 151 serves as a coordination point for Mn(2+). Glycine 214 contributes to the NADPH binding site. 4 residues coordinate 1-deoxy-D-xylulose 5-phosphate: serine 221, asparagine 226, lysine 227, and glutamate 230. Glutamate 230 serves as a coordination point for Mn(2+).

It belongs to the DXR family. Mg(2+) is required as a cofactor. The cofactor is Mn(2+).

It carries out the reaction 2-C-methyl-D-erythritol 4-phosphate + NADP(+) = 1-deoxy-D-xylulose 5-phosphate + NADPH + H(+). It functions in the pathway isoprenoid biosynthesis; isopentenyl diphosphate biosynthesis via DXP pathway; isopentenyl diphosphate from 1-deoxy-D-xylulose 5-phosphate: step 1/6. Catalyzes the NADPH-dependent rearrangement and reduction of 1-deoxy-D-xylulose-5-phosphate (DXP) to 2-C-methyl-D-erythritol 4-phosphate (MEP). The chain is 1-deoxy-D-xylulose 5-phosphate reductoisomerase from Shewanella amazonensis (strain ATCC BAA-1098 / SB2B).